The chain runs to 624 residues: Matrilin-4 (624 aa).

Positions 1–21 (MRGPCCWPLSLLLLFLQSWET) are cleaved as a signal peptide. One can recognise a VWFA 1 domain in the interval 36–215 (DLVFMIDSSR…EFGLQFQGRL (180 aa)). Asn-71 is a glycosylation site (N-linked (GlcNAc...) asparagine). EGF-like domains are found at residues 217–257 (GKDL…KNCL), 258–298 (ALDL…RSCR), 299–339 (AIDY…RSCR), and 340–380 (VRDF…KSCD). 12 disulfide bridges follow: Cys-221/Cys-232, Cys-228/Cys-241, Cys-243/Cys-256, Cys-262/Cys-273, Cys-269/Cys-282, Cys-284/Cys-297, Cys-303/Cys-314, Cys-310/Cys-323, Cys-325/Cys-338, Cys-344/Cys-355, Cys-351/Cys-364, and Cys-366/Cys-379. N-linked (GlcNAc...) asparagine glycosylation occurs at Asn-307. Residues 388-563 (DLVLLVDGSK…STMTHLLENL (176 aa)) form the VWFA 2 domain. A coiled-coil region spans residues 590–623 (EFQGRTLGALESLTQNLARLTERLEELENQLASR).

Interacts with COMP. As to expression, lung, brain, sternum, kidney and heart.

It is found in the secreted. In terms of biological role, major component of the extracellular matrix of cartilage. The sequence is that of Matrilin-4 (Matn4) from Mus musculus (Mouse).